We begin with the raw amino-acid sequence, 358 residues long: Peptide chain release factor 1 (358 aa).

Glutamine 237 is modified (N5-methylglutamine).

This sequence belongs to the prokaryotic/mitochondrial release factor family. Methylated by PrmC. Methylation increases the termination efficiency of RF1.

It localises to the cytoplasm. Functionally, peptide chain release factor 1 directs the termination of translation in response to the peptide chain termination codons UAG and UAA. This is Peptide chain release factor 1 from Mycoplasma mobile (strain ATCC 43663 / 163K / NCTC 11711) (Mesomycoplasma mobile).